The chain runs to 598 residues: NADH-quinone oxidoreductase subunit C/D (598 aa).

The tract at residues 1 to 189 (MTDLTTSDSL…DPYVLTKQKE (189 aa)) is NADH dehydrogenase I subunit C. The tract at residues 213–598 (DFMFLNLGPN…IDFVMSDVDR (386 aa)) is NADH dehydrogenase I subunit D.

In the N-terminal section; belongs to the complex I 30 kDa subunit family. The protein in the C-terminal section; belongs to the complex I 49 kDa subunit family. In terms of assembly, NDH-1 is composed of 13 different subunits. Subunits NuoB, CD, E, F, and G constitute the peripheral sector of the complex.

It localises to the cell inner membrane. The catalysed reaction is a quinone + NADH + 5 H(+)(in) = a quinol + NAD(+) + 4 H(+)(out). Its function is as follows. NDH-1 shuttles electrons from NADH, via FMN and iron-sulfur (Fe-S) centers, to quinones in the respiratory chain. The immediate electron acceptor for the enzyme in this species is believed to be ubiquinone. Couples the redox reaction to proton translocation (for every two electrons transferred, four hydrogen ions are translocated across the cytoplasmic membrane), and thus conserves the redox energy in a proton gradient. The sequence is that of NADH-quinone oxidoreductase subunit C/D from Yersinia pestis bv. Antiqua (strain Angola).